Consider the following 270-residue polypeptide: Beta carbonic anhydrase 1 (270 aa).

Residues C39, D41, H105, and C108 each contribute to the Zn(2+) site.

It belongs to the beta-class carbonic anhydrase family. The cofactor is Zn(2+).

The catalysed reaction is hydrogencarbonate + H(+) = CO2 + H2O. Reversible hydration of carbon dioxide. In Caenorhabditis briggsae, this protein is Beta carbonic anhydrase 1.